Reading from the N-terminus, the 66-residue chain is ATP synthase F(0) complex subunit 8 (66 aa).

A helical membrane pass occupies residues 8–24; the sequence is IWLLAVVIVLTTLMIFL. Lysine 54 bears the N6-acetyllysine; alternate mark. At lysine 54 the chain carries N6-succinyllysine; alternate. Lysine 57 bears the N6-acetyllysine mark.

It belongs to the ATPase protein 8 family. In terms of assembly, component of the ATP synthase complex composed at least of ATP5F1A/subunit alpha, ATP5F1B/subunit beta, ATP5MC1/subunit c (homooctomer), MT-ATP6/subunit a, MT-ATP8/subunit 8, ATP5ME/subunit e, ATP5MF/subunit f, ATP5MG/subunit g, ATP5MK/subunit k, ATP5MJ/subunit j, ATP5F1C/subunit gamma, ATP5F1D/subunit delta, ATP5F1E/subunit epsilon, ATP5PF/subunit F6, ATP5PB/subunit b, ATP5PD/subunit d, ATP5PO/subunit OSCP. ATP synthase complex consists of a soluble F(1) head domain (subunits alpha(3) and beta(3)) - the catalytic core - and a membrane F(0) domain - the membrane proton channel (subunits c, a, 8, e, f, g, k and j). These two domains are linked by a central stalk (subunits gamma, delta, and epsilon) rotating inside the F1 region and a stationary peripheral stalk (subunits F6, b, d, and OSCP). Interacts with PRICKLE3.

The protein resides in the mitochondrion membrane. Its function is as follows. Subunit 8, of the mitochondrial membrane ATP synthase complex (F(1)F(0) ATP synthase or Complex V) that produces ATP from ADP in the presence of a proton gradient across the membrane which is generated by electron transport complexes of the respiratory chain. ATP synthase complex consist of a soluble F(1) head domain - the catalytic core - and a membrane F(1) domain - the membrane proton channel. These two domains are linked by a central stalk rotating inside the F(1) region and a stationary peripheral stalk. During catalysis, ATP synthesis in the catalytic domain of F(1) is coupled via a rotary mechanism of the central stalk subunits to proton translocation. In vivo, can only synthesize ATP although its ATP hydrolase activity can be activated artificially in vitro. Part of the complex F(0) domain. The chain is ATP synthase F(0) complex subunit 8 from Mammuthus primigenius (Siberian woolly mammoth).